Consider the following 527-residue polypeptide: L-amino-acid oxidase (527 aa).

The first 27 residues, 1–27 (MDLHRAPWKSSAAAAVLLLALFSGAAA), serve as a signal peptide directing secretion. C37 and C200 form a disulfide bridge. The N-linked (GlcNAc...) asparagine glycan is linked to N58. FAD-binding positions include 70-71 (VA), 90-91 (EA), R98, 114-117 (GAMR), and V288. Residue R117 coordinates substrate. N393 carries an N-linked (GlcNAc...) asparagine glycan. Y403 contributes to the substrate binding site. FAD-binding positions include E485 and 492-497 (AWMESA). 492-493 (AW) provides a ligand contact to substrate.

Homodimer. FAD serves as cofactor. Expression mainly observed in plasma, spleen, kidney and gills with low levels detected in blood and no expression detected in brain, liver, heart, muscle or intestine (at protein level).

It localises to the secreted. It carries out the reaction an L-alpha-amino acid + O2 + H2O = a 2-oxocarboxylate + H2O2 + NH4(+). Functionally, inhibits the growth of both Gram-negative and Gram-positive bacteria. Displays strong antibacterial activity towards V.cholerae and E.tarda. Causes deformation of the surface of S.aureus and the formation of pores on the surface of E.coli. Strong antiparasitic activity is seen towards C.irritans, T.brucei and I.multifiliis. Cilia of treated theronts are lost and the macronucleus swells, inducing cell membrane rupture and efflux of the cytoplasm. In Siganus canaliculatus (White-spotted spinefoot), this protein is L-amino-acid oxidase.